A 181-amino-acid chain; its full sequence is Endoribonuclease YbeY (181 aa).

Zn(2+)-binding residues include His-120, His-124, and His-130. Positions Ala-157 to Arg-181 are disordered. Residues Arg-161–Glu-174 show a composition bias toward gly residues.

It belongs to the endoribonuclease YbeY family. It depends on Zn(2+) as a cofactor.

It is found in the cytoplasm. Single strand-specific metallo-endoribonuclease involved in late-stage 70S ribosome quality control and in maturation of the 3' terminus of the 16S rRNA. This Frankia alni (strain DSM 45986 / CECT 9034 / ACN14a) protein is Endoribonuclease YbeY.